The following is a 346-amino-acid chain: S-adenosylmethionine:tRNA ribosyltransferase-isomerase (346 aa).

Belongs to the QueA family. As to quaternary structure, monomer.

It is found in the cytoplasm. It carries out the reaction 7-aminomethyl-7-carbaguanosine(34) in tRNA + S-adenosyl-L-methionine = epoxyqueuosine(34) in tRNA + adenine + L-methionine + 2 H(+). The protein operates within tRNA modification; tRNA-queuosine biosynthesis. Functionally, transfers and isomerizes the ribose moiety from AdoMet to the 7-aminomethyl group of 7-deazaguanine (preQ1-tRNA) to give epoxyqueuosine (oQ-tRNA). In Neisseria gonorrhoeae (strain ATCC 700825 / FA 1090), this protein is S-adenosylmethionine:tRNA ribosyltransferase-isomerase.